The sequence spans 273 residues: Endoplasmic reticulum resident protein 27 (273 aa).

A signal peptide spans 1–25; it reads MEAAPSRFMFLLFLLTCELAAEVAA. Residues 39 to 152 form the Thioredoxin domain; sequence EPTWLTDVPA…MVTEYNPVTV (114 aa). An N-linked (GlcNAc...) asparagine glycan is attached at Asn100. The segment at 230 to 233 is PDIA3-binding site; the sequence is DEWD. The Prevents secretion from ER motif lies at 270–273; that stretch reads KVEL.

This sequence belongs to the protein disulfide isomerase family. As to quaternary structure, interacts with PDIA3.

Its subcellular location is the endoplasmic reticulum lumen. Its function is as follows. Specifically binds unfolded proteins and may recruit protein disulfide isomerase PDIA3 to unfolded substrates. Binds protein substrates via a hydrophobic pocket in the C-terminal domain. May play a role in the unfolded stress response. This Homo sapiens (Human) protein is Endoplasmic reticulum resident protein 27 (ERP27).